The following is a 345-amino-acid chain: uncharacterized protein (345 aa).

Belongs to the methyltransferase superfamily.

This is an uncharacterized protein from Streptomyces fradiae (Streptomyces roseoflavus).